The following is a 136-amino-acid chain: Galectin-7 (136 aa).

Residues 6 to 136 (HKSSLPEGIR…DVQLDSVRIF (131 aa)) form the Galectin domain. Residue 70-76 (WGREERG) coordinates a beta-D-galactoside.

In terms of assembly, monomer. As to expression, mainly expressed in stratified squamous epithelium.

Its subcellular location is the cytoplasm. The protein resides in the nucleus. It localises to the secreted. In terms of biological role, could be involved in cell-cell and/or cell-matrix interactions necessary for normal growth control. Pro-apoptotic protein that functions intracellularly upstream of JNK activation and cytochrome c release. The polypeptide is Galectin-7 (LGALS7) (Homo sapiens (Human)).